The primary structure comprises 641 residues: 1-deoxy-D-xylulose-5-phosphate synthase (641 aa).

Thiamine diphosphate-binding positions include histidine 79 and 120–122 (AHS). Mg(2+) is bound at residue aspartate 151. Thiamine diphosphate-binding positions include 152 to 153 (GA), asparagine 180, tyrosine 290, and glutamate 372. Asparagine 180 is a Mg(2+) binding site.

This sequence belongs to the transketolase family. DXPS subfamily. As to quaternary structure, homodimer. The cofactor is Mg(2+). It depends on thiamine diphosphate as a cofactor.

The enzyme catalyses D-glyceraldehyde 3-phosphate + pyruvate + H(+) = 1-deoxy-D-xylulose 5-phosphate + CO2. The protein operates within metabolic intermediate biosynthesis; 1-deoxy-D-xylulose 5-phosphate biosynthesis; 1-deoxy-D-xylulose 5-phosphate from D-glyceraldehyde 3-phosphate and pyruvate: step 1/1. Functionally, catalyzes the acyloin condensation reaction between C atoms 2 and 3 of pyruvate and glyceraldehyde 3-phosphate to yield 1-deoxy-D-xylulose-5-phosphate (DXP). In Bradyrhizobium sp. (strain ORS 278), this protein is 1-deoxy-D-xylulose-5-phosphate synthase.